A 158-amino-acid chain; its full sequence is Transcription elongation factor GreA (158 aa).

Residues 47–73 are a coiled coil; sequence AEYHAAREKQSFIEGRIQELQAKLARA.

This sequence belongs to the GreA/GreB family.

In terms of biological role, necessary for efficient RNA polymerase transcription elongation past template-encoded arresting sites. The arresting sites in DNA have the property of trapping a certain fraction of elongating RNA polymerases that pass through, resulting in locked ternary complexes. Cleavage of the nascent transcript by cleavage factors such as GreA or GreB allows the resumption of elongation from the new 3'terminus. GreA releases sequences of 2 to 3 nucleotides. In Thermodesulfovibrio yellowstonii (strain ATCC 51303 / DSM 11347 / YP87), this protein is Transcription elongation factor GreA.